The chain runs to 216 residues: Ribonuclease T (216 aa).

One can recognise an Exonuclease domain in the interval V28–F202. Residues D31, E33, H189, and D194 each contribute to the Mg(2+) site. Catalysis depends on H189, which acts as the Proton donor/acceptor.

Belongs to the RNase T family. In terms of assembly, homodimer. The cofactor is Mg(2+).

Functionally, trims short 3' overhangs of a variety of RNA species, leaving a one or two nucleotide 3' overhang. Responsible for the end-turnover of tRNA: specifically removes the terminal AMP residue from uncharged tRNA (tRNA-C-C-A). Also appears to be involved in tRNA biosynthesis. This chain is Ribonuclease T, found in Xanthomonas campestris pv. campestris (strain 8004).